Reading from the N-terminus, the 362-residue chain is MDRPAREHLKFSKANTKNEIREMRIYKDDTADGLCFSEINVGCTSTTPKMSLSDYFSSVSCSFDGEMRIPDIPLKMYGDLHFHEQFTNDVDLDLLCWQLLSSNQDSRALCVNILRMVTSLSLGNAFISEGRYHYAIDTTEQTSAEDSDALRFLARIAKIVIKNDVDKSDVVAAQQTLIYYYFGNSYQGIHLNWDSKSSQQSIHGYSTSEVCLDHYIRMKVDLFHGLRSKNLVYGGNYQLVYQALFYYYVITNGRFSSGFNVRKDSIKSYFVPNDDPSMCNVSPRKPSLSLMFIRAVLITILIKDYSPVKEIPKYLRQLEVENPLTNSCLITDNGLRSEVPMNAAAPSAPTPTELPVFSPPSS.

The interval 341–362 (MNAAAPSAPTPTELPVFSPPSS) is disordered.

The sequence is that of Probable non-structural 41.0 kDa protein (S6) from Maize rough dwarf virus (MRDV).